A 134-amino-acid chain; its full sequence is Histone-like protein Rv3852 (134 aa).

A compositionally biased stretch (basic and acidic residues) spans 1–10 (MPDPQDRPDS). Residues 1–68 (MPDPQDRPDS…PAEAPVSLQQ (68 aa)) are disordered. Basic residues predominate over residues 23-48 (LPAKKAAKKAPARKTPAKKAPAKKTP). The chain crosses the membrane as a helical span at residues 111–128 (PVPLIVAVTLSLLALLLI).

As to quaternary structure, homodimer in solution. Is probably able to self-associate in higher oligomers along the DNA molecules. Interacts with the N-terminal region of Wag31.

Its subcellular location is the cell inner membrane. With respect to regulation, can interact directly in vitro with the compound agrimophol, a phloroglucinol from the A.pilosa plant, whose extracts have been used in traditional Chinese medicine to treat pulmonary infections. Interaction with agrimophol leads to disruption of Rv3852's DNA binding function. Functionally, binds DNA in vitro. It has been proposed that Rv3852 plays a role in nucleoid organization and may function as an anchorage to tether the DNA to the membrane. However, it was later shown that it has no influence on nucleoid shape or compaction. It plays no role in virulence and only a minor role in the control of transcription, and does not appear to function as a typical nucleoid-associated protein. In terms of biological role, interacts with Wag31, an important cell shape and cell wall integrity determinant, and facilitates the localization of Wag31 to the cell poles and the cell wall, thus enabling nascent peptidoglycan synthesis. In Mycobacterium tuberculosis (strain ATCC 25618 / H37Rv), this protein is Histone-like protein Rv3852.